The sequence spans 302 residues: Protoheme IX farnesyltransferase (302 aa).

A run of 9 helical transmembrane segments spans residues 28–48, 50–70, 93–115, 119–138, 147–167, 172–192, 219–239, 242–262, and 271–291; these read LALLMLTMYGAYFAGGGSLDP, MLALLTIMGFTSIGGVTAFNM, LNPYEALAGSLALVIAGVLSAAA, YVALTVIAGLYFDIIAYTQL, IIFGSIAGSMPALGGWAAAAG, GGVLMALIVFLWQPMHVWFLG, LIAVSLAGLIAVAWAFALYYG, FLTAVITTVLAALAISRIGGF, and ALKLFKFASPIIAVVFIILPL.

This sequence belongs to the UbiA prenyltransferase family. Protoheme IX farnesyltransferase subfamily.

Its subcellular location is the cell membrane. The enzyme catalyses heme b + (2E,6E)-farnesyl diphosphate + H2O = Fe(II)-heme o + diphosphate. It participates in porphyrin-containing compound metabolism; heme O biosynthesis; heme O from protoheme: step 1/1. In terms of biological role, converts heme B (protoheme IX) to heme O by substitution of the vinyl group on carbon 2 of heme B porphyrin ring with a hydroxyethyl farnesyl side group. In Aeropyrum pernix (strain ATCC 700893 / DSM 11879 / JCM 9820 / NBRC 100138 / K1), this protein is Protoheme IX farnesyltransferase.